The chain runs to 215 residues: MGREFLDLFEQWAESYDQSVEGYDEQYRDVFAGYDRILSTVADKAGQVVLEFGIGTGNLTKKLLERGKTVYGIEPSAPMRKKAAEKLGERAVIMDGDFLQFPLPPEPIDTIASTYAFHHLTDAEKDEAIAKYSQLLHSGGKIVFADTAFRDKEAFRQTVEAARARGFHDLADDLEREYYTTLDVLASLFANHGFSVSFAQQNAFVWVMEAVKQTT.

S-adenosyl-L-methionine-binding residues include G53, E74, and D97.

This sequence belongs to the methyltransferase superfamily. YrrT family.

In terms of biological role, could be a S-adenosyl-L-methionine-dependent methyltransferase. This is an uncharacterized protein from Geobacillus thermodenitrificans (strain NG80-2).